A 383-amino-acid chain; its full sequence is Lipoyl synthase, mitochondrial (383 aa).

The transit peptide at 1-19 directs the protein to the mitochondrion; it reads MHASTLTRCMRVAQNARCL. The disordered stretch occupies residues 69 to 97; that stretch reads DAAPGTKPSRKPNASNRKPKWLKAQPTQG. Residues Cys-116, Cys-121, Cys-127, Cys-147, Cys-151, Cys-154, and Ser-362 each contribute to the [4Fe-4S] cluster site. The region spanning 132–351 is the Radical SAM core domain; sequence KDGIATATIM…QKVAEQMGFL (220 aa).

This sequence belongs to the radical SAM superfamily. Lipoyl synthase family. The cofactor is [4Fe-4S] cluster.

Its subcellular location is the mitochondrion. It carries out the reaction [[Fe-S] cluster scaffold protein carrying a second [4Fe-4S](2+) cluster] + N(6)-octanoyl-L-lysyl-[protein] + 2 oxidized [2Fe-2S]-[ferredoxin] + 2 S-adenosyl-L-methionine + 4 H(+) = [[Fe-S] cluster scaffold protein] + N(6)-[(R)-dihydrolipoyl]-L-lysyl-[protein] + 4 Fe(3+) + 2 hydrogen sulfide + 2 5'-deoxyadenosine + 2 L-methionine + 2 reduced [2Fe-2S]-[ferredoxin]. The protein operates within protein modification; protein lipoylation via endogenous pathway; protein N(6)-(lipoyl)lysine from octanoyl-[acyl-carrier-protein]: step 2/2. Catalyzes the radical-mediated insertion of two sulfur atoms into the C-6 and C-8 positions of the octanoyl moiety bound to the lipoyl domains of lipoate-dependent enzymes, thereby converting the octanoylated domains into lipoylated derivatives. The polypeptide is Lipoyl synthase, mitochondrial (Phytophthora infestans (strain T30-4) (Potato late blight agent)).